The sequence spans 101 residues: Feather keratin Cos2-2 (101 aa).

Residue serine 2 is modified to N-acetylserine.

The protein belongs to the avian keratin family. The avian keratins (F-ker, S-ker, C-ker and B-ker) are a complex mixture of very similar polypeptides.

The chain is Feather keratin Cos2-2 from Columba livia (Rock dove).